Here is a 106-residue protein sequence, read N- to C-terminus: Nucleoid-associated protein DP1429 (106 aa).

It belongs to the YbaB/EbfC family. In terms of assembly, homodimer.

The protein localises to the cytoplasm. Its subcellular location is the nucleoid. Binds to DNA and alters its conformation. May be involved in regulation of gene expression, nucleoid organization and DNA protection. In Desulfotalea psychrophila (strain LSv54 / DSM 12343), this protein is Nucleoid-associated protein DP1429.